The sequence spans 230 residues: Glutathione S-transferase 2 (230 aa).

The 85-residue stretch at Ala2 to Arg86 folds into the GST N-terminal domain. The GST C-terminal domain occupies Asp93 to His230.

The protein belongs to the GST superfamily.

The enzyme catalyses RX + glutathione = an S-substituted glutathione + a halide anion + H(+). In terms of biological role, involved in the oxidative stress response and detoxification. The polypeptide is Glutathione S-transferase 2 (gst2) (Schizosaccharomyces pombe (strain 972 / ATCC 24843) (Fission yeast)).